The following is a 79-amino-acid chain: Small ribosomal subunit protein bS18 (79 aa).

The protein belongs to the bacterial ribosomal protein bS18 family. Part of the 30S ribosomal subunit. Forms a tight heterodimer with protein bS6.

Its function is as follows. Binds as a heterodimer with protein bS6 to the central domain of the 16S rRNA, where it helps stabilize the platform of the 30S subunit. The protein is Small ribosomal subunit protein bS18 of Rhodopseudomonas palustris (strain BisB5).